The chain runs to 101 residues: NAD(P)H-quinone oxidoreductase subunit 4L, chloroplastic (101 aa).

3 consecutive transmembrane segments (helical) span residues 2-22 (MFEH…YGLI), 32-52 (ICLE…SDLF), and 61-81 (IFAI…LSIL).

It belongs to the complex I subunit 4L family. As to quaternary structure, NDH is composed of at least 16 different subunits, 5 of which are encoded in the nucleus.

It localises to the plastid. The protein resides in the chloroplast thylakoid membrane. It catalyses the reaction a plastoquinone + NADH + (n+1) H(+)(in) = a plastoquinol + NAD(+) + n H(+)(out). The enzyme catalyses a plastoquinone + NADPH + (n+1) H(+)(in) = a plastoquinol + NADP(+) + n H(+)(out). Its function is as follows. NDH shuttles electrons from NAD(P)H:plastoquinone, via FMN and iron-sulfur (Fe-S) centers, to quinones in the photosynthetic chain and possibly in a chloroplast respiratory chain. The immediate electron acceptor for the enzyme in this species is believed to be plastoquinone. Couples the redox reaction to proton translocation, and thus conserves the redox energy in a proton gradient. The sequence is that of NAD(P)H-quinone oxidoreductase subunit 4L, chloroplastic from Agrostis stolonifera (Creeping bentgrass).